The following is a 770-amino-acid chain: POU domain, class 2, transcription factor 1 (770 aa).

Residues methionine 1–leucine 26 show a composition bias toward polar residues. Disordered stretches follow at residues methionine 1–valine 33, leucine 68–alanine 97, valine 262–aspartate 285, and leucine 357–lysine 385. Positions aspartate 80–alanine 97 are enriched in low complexity. Residues valine 262–proline 272 show a composition bias toward polar residues. 2 positions are modified to phosphothreonine: threonine 271 and threonine 277. A POU-specific domain is found at glutamate 281–glutamate 355. Position 284 is a phosphoserine (serine 284). The segment covering leucine 357–proline 372 has biased composition (low complexity). Positions arginine 382 to asparagine 441 form a DNA-binding region, homeobox. Serine 388 and serine 451 each carry phosphoserine. Over residues threonine 519–proline 580 the composition is skewed to low complexity. Positions threonine 519–glutamine 589 are disordered.

This sequence belongs to the POU transcription factor family. Class-2 subfamily. In terms of assembly, interacts with POU2AF1; the interaction increases POU2F1 transactivation activity. Interacts with NR3C1, AR, PGR and HCFC1. Phosphorylated by PRKDC. Ubiquitously expressed. However, isoforms 4 and 5 are only expressed in lymphocytes.

It localises to the nucleus. Transcription factor that binds to the octamer motif (5'-ATTTGCAT-3') and activates the promoters of the genes for some small nuclear RNAs (snRNA) and of genes such as those for histone H2B and immunoglobulins. Modulates transcription transactivation by NR3C1, AR and PGR. The chain is POU domain, class 2, transcription factor 1 (Pou2f1) from Mus musculus (Mouse).